Consider the following 362-residue polypeptide: Phospho-N-acetylmuramoyl-pentapeptide-transferase (362 aa).

A run of 10 helical transmembrane segments spans residues 18-38 (VFGY…AISL), 73-93 (TMGG…WGDL), 97-117 (YVWV…VDDW), 134-154 (YFWT…SATT), 160-180 (LIVP…FIAL), 200-220 (GLAI…AYVA), 237-257 (AGEL…FLWF), 264-284 (VFMG…IAVV), 289-309 (IVLF…MVQV), and 339-359 (QVVV…LSTL).

The protein belongs to the glycosyltransferase 4 family. MraY subfamily. Mg(2+) serves as cofactor.

The protein localises to the cell inner membrane. It catalyses the reaction UDP-N-acetyl-alpha-D-muramoyl-L-alanyl-gamma-D-glutamyl-meso-2,6-diaminopimeloyl-D-alanyl-D-alanine + di-trans,octa-cis-undecaprenyl phosphate = di-trans,octa-cis-undecaprenyl diphospho-N-acetyl-alpha-D-muramoyl-L-alanyl-D-glutamyl-meso-2,6-diaminopimeloyl-D-alanyl-D-alanine + UMP. The protein operates within cell wall biogenesis; peptidoglycan biosynthesis. Catalyzes the initial step of the lipid cycle reactions in the biosynthesis of the cell wall peptidoglycan: transfers peptidoglycan precursor phospho-MurNAc-pentapeptide from UDP-MurNAc-pentapeptide onto the lipid carrier undecaprenyl phosphate, yielding undecaprenyl-pyrophosphoryl-MurNAc-pentapeptide, known as lipid I. The chain is Phospho-N-acetylmuramoyl-pentapeptide-transferase from Azoarcus sp. (strain BH72).